The following is a 232-amino-acid chain: Cytidylate kinase (232 aa).

11-19 (GPAGAGKST) provides a ligand contact to ATP.

Belongs to the cytidylate kinase family. Type 1 subfamily.

The protein localises to the cytoplasm. The catalysed reaction is CMP + ATP = CDP + ADP. The enzyme catalyses dCMP + ATP = dCDP + ADP. The chain is Cytidylate kinase from Desulfitobacterium hafniense (strain Y51).